Here is a 357-residue protein sequence, read N- to C-terminus: Cinnamyl alcohol dehydrogenase 1 (357 aa).

Residues 20-348 (GILSPYTYTL…KNDVRYRFVV (329 aa)) enclose the Enoyl reductase (ER) domain. Cys-47 serves as a coordination point for Zn(2+). Position 49 (Ser-49) interacts with NADP(+). Residues His-69, Glu-70, Cys-100, Cys-103, Cys-106, Cys-114, and Cys-163 each contribute to the Zn(2+) site. Residues Thr-167, 188–193 (GLGGVG), 211–216 (SSSDKK), Thr-251, Gly-275, and 298–300 (SFI) contribute to the NADP(+) site.

It belongs to the zinc-containing alcohol dehydrogenase family. Homodimer. The cofactor is Zn(2+). As to expression, accumulates mainly in the placenta of red fruits, and, to a lower extent, in green fruits placenta, pericarp and seeds.

It is found in the cytoplasm. It carries out the reaction (E)-cinnamyl alcohol + NADP(+) = (E)-cinnamaldehyde + NADPH + H(+). The enzyme catalyses (E)-coniferol + NADP(+) = (E)-coniferaldehyde + NADPH + H(+). The catalysed reaction is (E)-sinapyl alcohol + NADP(+) = (E)-sinapaldehyde + NADPH + H(+). It catalyses the reaction (E)-4-coumaroyl alcohol + NADP(+) = (E)-4-coumaraldehyde + NADPH + H(+). It carries out the reaction (E)-caffeyl alcohol + NADP(+) = (E)-caffeyl aldehyde + NADPH + H(+). The enzyme catalyses vanillin + NADPH + H(+) = 4-hydroxy-3-methoxy-benzenemethanol + NADP(+). It functions in the pathway aromatic compound metabolism; phenylpropanoid biosynthesis. With respect to regulation, inhibited, in a concentration-dependent manner, by N-(O-hydroxyphenyl) sulfinamoyltertiobutyl acetate (OHPAS), a specific cinnamyl alcohol dehydrogenase (CAD) inhibitor, as well as by ethylenediaminetetraacetic acid (EDTA), a metalloenzyme inhibitor. Functionally, involved in the biosynthesis of capsinoids natural products (e.g. capsiate), non-pungent alkaloids synthesized from phenylpropanoid intermediates in the placental tissue of sweet chili pepper fruit acting as repellant on herbivorous mammals. Catalyzes the reduction of vanillin to generate vanillyl alcohol, a precursor of capsiate, a non-pungent component that accumulates mainly in the placenta of mature red fruits, but also in green fruits to lower levels. Involved in lignin biosynthesis. Catalyzes the final step specific for the production of lignin monomers. Mediates the conversion of cinnamaldehyde and coniferaldehyde to cinnamyl alcohol and coniferyl alcohol, respectively. Catalyzes the NADPH-dependent reduction of 5-hydroxyconiferaldehyde, sinapaldehyde, 4-coumaraldehyde and caffeyl aldehyde to their respective alcohols. This chain is Cinnamyl alcohol dehydrogenase 1, found in Capsicum annuum (Capsicum pepper).